We begin with the raw amino-acid sequence, 286 residues long: NADP-dependent dehydrogenase clz5 (286 aa).

Positions 49, 51, 93, 207, 211, 241, and 245 each coordinate NADP(+). The active-site Proton acceptor is Tyr207. Catalysis depends on Tyr207, which acts as the Proton donor. The active-site Lowers pKa of active site Tyr is the Lys211.

This sequence belongs to the short-chain dehydrogenases/reductases (SDR) family. In terms of assembly, homodimer.

It is found in the cytoplasm. It localises to the cytosol. It functions in the pathway secondary metabolite biosynthesis. NADP-dependent dehydrogenase; part of the gene cluster that mediates the biosynthesis of squalestatin S1 (SQS1, also known as zaragozic acid A), a heavily oxidized fungal polyketide that offers potent cholesterol lowering activity by targeting squalene synthase (SS). SQS1 is composed of a 2,8-dioxobicyclic[3.2.1]octane-3,4,5-tricarboxyclic acid core that is connected to two lipophilic polyketide arms. These initial steps feature the priming of an unusual benzoic acid starter unit onto the highly reducing polyketide synthase clz14, followed by oxaloacetate extension and product release to generate a tricarboxylic acid containing product. The phenylalanine ammonia lyase (PAL) clz10 and the acyl-CoA ligase clz12 are involved in transforming phenylalanine into benzoyl-CoA. The citrate synthase-like protein clz17 is involved in connecting the C-alpha-carbons of the hexaketide chain and oxaloacetate to afford the tricarboxylic acid unit. The potential hydrolytic enzymes, clz11 and clz13, are in close proximity to pks2 and may participate in product release. On the other side, the tetraketide arm is synthesized by a the squalestatin tetraketide synthase clz2 and enzymatically esterified to the core in the last biosynthetic step, by the acetyltransferase clz6. The biosynthesis of the tetraketide must involve 3 rounds of chain extension. After the first and second rounds methyl-transfer occurs, and in all rounds of extension the ketoreductase and dehydratase are active. The enoyl reductase and C-MeT of clz2 are not active in the final round of extension. The acetyltransferase clz6 appears to have a broad substrate selectivity for its acyl CoA substrate, allowing the in vitro synthesis of novel squalestatins. The biosynthesis of SQS1 requires several oxidative steps likely performed by oxidoreductases clz3, clz15 and clz16. Finally, in support of the identification of the cluster as being responsible for SQS1 production, the cluster contains a gene encoding a putative squalene synthase (SS) clz20, suggesting a likely mechanism for self-resistance. The polypeptide is NADP-dependent dehydrogenase clz5 (Cochliobolus lunatus (Filamentous fungus)).